We begin with the raw amino-acid sequence, 1080 residues long: Presequence protease 2, chloroplastic/mitochondrial (1080 aa).

Residues 1-84 (MLRSLTCSST…NGQFSRLSIR (84 aa)) constitute a chloroplast and mitochondrion transit peptide. H161 contacts Zn(2+). E164 functions as the Proton acceptor in the catalytic mechanism. H165 contacts Zn(2+). The active site involves E239. Position 261 (E261) interacts with Zn(2+). Residue R704 coordinates Mg(2+).

This sequence belongs to the peptidase M16 family. PreP subfamily. In terms of assembly, homodimer. Requires Zn(2+) as cofactor. Mg(2+) is required as a cofactor. Expressed in leaves, flowers and roots, but not detected in siliques and shoots.

Its subcellular location is the plastid. The protein localises to the chloroplast stroma. It localises to the mitochondrion matrix. Completely inhibited by the metal chelator orthophenanthroline. In terms of biological role, ATP-independent protease that degrades both mitochondrial and chloroplastic transit peptides after their cleavage. Also degrades other unstructured peptides. Specific for peptides in the range of 10 to 65 residues. Shows a preference for cleavage after small polar residues and before basic residues, but without any positional preference. The sequence is that of Presequence protease 2, chloroplastic/mitochondrial (PREP2) from Arabidopsis thaliana (Mouse-ear cress).